The following is a 188-amino-acid chain: Oleosin S2-2 (188 aa).

N-acetylalanine is present on A2. The polar stretch occupies residues 2–51; sequence ATVERRVQVDPTDKRIHLQPQYEGDVGYGYGYGGRADYKSSGPSSNQIVA. The next 3 helical transmembrane spans lie at 49–69, 74–94, and 96–116; these read IVALIVGVPVGGSLLALAGLT, VIGLMLSVPLFLLFSPVIVPA, and ITIGLAVTAILASGLFGLTGL. The segment at 52 to 125 is hydrophobic; that stretch reads LIVGVPVGGS…LSSVSWVLNY (74 aa). The tract at residues 164-188 is disordered; the sequence is DKAHEAHDTSLTTETTEPGKTRRHT. Residues 172-181 are compositionally biased toward polar residues; it reads TSLTTETTEP.

This sequence belongs to the oleosin family.

The protein resides in the lipid droplet. It localises to the membrane. Functionally, may have a structural role to stabilize the lipid body during desiccation of the seed by preventing coalescence of the oil. Probably interacts with both lipid and phospholipid moieties of lipid bodies. May also provide recognition signals for specific lipase anchorage in lipolysis during seedling growth. This is Oleosin S2-2 (S2) from Brassica napus (Rape).